The sequence spans 115 residues: MTGPARSGAAIRGAGRTVARGLIFLIQLYRHMVSPLRPATCRFVPTCSQYAVDALDEYGLIRGSWLAAARLAKCGPWHQGGWDPIPERPGCRVNCQDASDAWAVRATRGESGSLV.

This sequence belongs to the UPF0161 family.

The protein resides in the cell membrane. Functionally, could be involved in insertion of integral membrane proteins into the membrane. The sequence is that of Putative membrane protein insertion efficiency factor from Mycolicibacterium paratuberculosis (strain ATCC BAA-968 / K-10) (Mycobacterium paratuberculosis).